Reading from the N-terminus, the 243-residue chain is Transcription factor TFIIS homolog (243 aa).

Positions 77–201 (MRDIIQMMFF…SQQKVAEKTS (125 aa)) constitute a TFIIS central domain. The segment at 202–242 (QLYKCPNCKQRMCTYREVQTRALDEPSTIYCTCKKCGHEFI) adopts a TFIIS-type zinc-finger fold. Residues C206, C209, C234, and C237 each contribute to the Zn(2+) site.

Belongs to the TFS-II family.

Putative initiation factor. Necessary for efficient transcription elongation past template-encoded arresting sites. This is Transcription factor TFIIS homolog from African swine fever virus (isolate Pig/Kenya/KEN-50/1950) (ASFV).